A 364-amino-acid chain; its full sequence is Caffeic acid 3-O-methyltransferase 3 (364 aa).

Substrate is bound at residue 129 to 135 (MNQDKVL). The substrate binding stretch occupies residues 161–179 (AFEYHGTDPRFNKVFNKGM). Positions 207, 230, 250, 251, and 264 each coordinate S-adenosyl-L-methionine. Histidine 268 serves as the catalytic Proton acceptor.

It belongs to the class I-like SAM-binding methyltransferase superfamily. Cation-independent O-methyltransferase family. COMT subfamily. Homodimer.

The catalysed reaction is (E)-caffeate + S-adenosyl-L-methionine = (E)-ferulate + S-adenosyl-L-homocysteine + H(+). It participates in aromatic compound metabolism; phenylpropanoid biosynthesis. Functionally, catalyzes the conversion of caffeic acid to ferulic acid and of 5-hydroxyferulic acid to sinapic acid. The resulting products may subsequently be converted to the corresponding alcohols that are incorporated into lignins. The polypeptide is Caffeic acid 3-O-methyltransferase 3 (HOMT3) (Populus kitakamiensis (Aspen)).